Here is a 155-residue protein sequence, read N- to C-terminus: S-ribosylhomocysteine lyase (155 aa).

3 residues coordinate Fe cation: His58, His62, and Cys125.

It belongs to the LuxS family. Homodimer. Requires Fe cation as cofactor.

The enzyme catalyses S-(5-deoxy-D-ribos-5-yl)-L-homocysteine = (S)-4,5-dihydroxypentane-2,3-dione + L-homocysteine. Its function is as follows. Involved in the synthesis of autoinducer 2 (AI-2) which is secreted by bacteria and is used to communicate both the cell density and the metabolic potential of the environment. The regulation of gene expression in response to changes in cell density is called quorum sensing. Catalyzes the transformation of S-ribosylhomocysteine (RHC) to homocysteine (HC) and 4,5-dihydroxy-2,3-pentadione (DPD). This Helicobacter pylori (strain Shi470) protein is S-ribosylhomocysteine lyase.